Reading from the N-terminus, the 1216-residue chain is 1-phosphatidylinositol 4,5-bisphosphate phosphodiesterase beta-1 (1216 aa).

Cysteine 17 carries S-palmitoyl cysteine lipidation. Serine 236 bears the Phosphoserine mark. Residues 316-467 form the PI-PLC X-box domain; it reads EDMSQPLSHY…LMYKILVKNK (152 aa). Catalysis depends on residues histidine 331 and histidine 378. Serine 417 carries the post-translational modification Phosphoserine. The interval 469-534 is disordered; that stretch reads KSHKSSEGSG…MDEGTAGSEA (66 aa). The span at 472 to 483 shows a compositional bias: basic and acidic residues; it reads KSSEGSGKKKLS. The span at 491-501 shows a compositional bias: low complexity; sequence SDSSSVFEPSS. The span at 507-518 shows a compositional bias: acidic residues; the sequence is ADTESDDDDDDD. Threonine 509 carries the post-translational modification Phosphothreonine. Serine 511 and serine 582 each carry phosphoserine. The PI-PLC Y-box domain maps to 540 to 656; that stretch reads MSNLVNYIQP…GYRLKPEFMR (117 aa). In terms of domain architecture, C2 spans 656–786; that stretch reads RRPDKHFDPF…RNERNQPLTL (131 aa). 4 disordered regions span residues 834 to 891, 967 to 989, 1072 to 1095, and 1173 to 1216; these read DEEE…VKAP, EKSA…GSSA, MDKK…EEEK, and ISED…DTPL. A compositionally biased stretch (polar residues) spans 846–868; it reads ETSSEAPSETRTTPAENGVNHTA. Serine 887 carries the post-translational modification Phosphoserine; by PKC. A compositionally biased stretch (basic and acidic residues) spans 967–979; that stretch reads EKSAKKDSKKKSE. Phosphoserine occurs at positions 978 and 987. Over residues 1075-1095 the composition is skewed to basic and acidic residues; that stretch reads KRQEKITEAKSKDKSQMEEEK. Residues serine 1197, serine 1199, and serine 1200 each carry the phosphoserine modification. A compositionally biased stretch (basic and acidic residues) spans 1205–1216; that stretch reads RENPGREFDTPL.

In terms of assembly, interacts with DGKQ. Requires Ca(2+) as cofactor. In terms of processing, palmitoylated. Palmitoylation at Cys-17 by ZDHHC21 regulates the signaling activity of PLCB1 and the function of the endothelial barrier. Palmitoylation by ZDHHC21 is stimulated by inflammation.

The protein resides in the nucleus membrane. It is found in the cytoplasm. The enzyme catalyses a 1,2-diacyl-sn-glycero-3-phospho-(1D-myo-inositol-4,5-bisphosphate) + H2O = 1D-myo-inositol 1,4,5-trisphosphate + a 1,2-diacyl-sn-glycerol + H(+). The catalysed reaction is a 1,2-diacyl-sn-glycero-3-phospho-(1D-myo-inositol) + H2O = 1D-myo-inositol 1-phosphate + a 1,2-diacyl-sn-glycerol + H(+). Catalyzes the hydrolysis of 1-phosphatidylinositol 4,5-bisphosphate into diacylglycerol (DAG) and inositol 1,4,5-trisphosphate (IP3) and mediates intracellular signaling downstream of G protein-coupled receptors. Regulates the function of the endothelial barrier. The sequence is that of 1-phosphatidylinositol 4,5-bisphosphate phosphodiesterase beta-1 from Mus musculus (Mouse).